The chain runs to 566 residues: Multidrug and toxin extrusion protein 1 (566 aa).

N-acetylmethionine is present on M1. The next 13 helical transmembrane spans lie at 37–57 (LLVLAGPAFLAQLMMFLISFI), 72–92 (AVTLAIAVINVTGISVGHGLS), 120–140 (LILLLCCFPCWALFINTEQIL), 152–172 (LTQTYVMVFIPALPAAFLYTL), 176–196 (YLLNQGIVLPQVITGIAANLV), 216–236 (ALANTISQFALAIFLFLYILW), 257–276 (SFLQLAIPSMLMLCIEWWAY), 295–315 (SITYELAIIVYMIPAGFSVAA), 336–356 (AISLIVTELFAVTFCVLLLGC), 370–390 (IVALVAQVVPIYAVSHLFEAL), 409–429 (IVNAIGYYVIGLPIGISLMFV), 437–457 (LWSGIIICSVCQTSCFLVFIA), and 543–563 (GLLFLGVVLVLVGGILVRVYI).

Belongs to the multi antimicrobial extrusion (MATE) (TC 2.A.66.1) family. As to expression, highly expressed in kidney and placenta, moderately in stomach, colon, lung, spleen, skeletal muscle and prostate, and slightly in spleen. In the kidney, found in medulla and cortex, especially in the proximal convoluted and straight tubules. No expression was observed in heart, brain, small intestine and liver. Expressed in Sertoli cells in testis.

It localises to the cell membrane. It is found in the apical cell membrane. The enzyme catalyses thiamine(out) + H(+)(in) = thiamine(in) + H(+)(out). It carries out the reaction estrone 3-sulfate(in) + H(+)(out) = estrone 3-sulfate(out) + H(+)(in). The catalysed reaction is creatinine(in) + H(+)(out) = creatinine(out) + H(+)(in). It catalyses the reaction agmatine(in) + H(+)(out) = agmatine(out) + H(+)(in). Multidrug efflux pump that functions as a H(+)/organic cation antiporter. Plays a physiological role in the excretion of cationic compounds including endogenous metabolites, drugs, toxins through the kidney and liver, into urine and bile respectively. Mediates the efflux of endogenous compounds such as creatinine, vitamin B1/thiamine, agmatine and estrone-3-sulfate. May also contribute to regulate the transport of cationic compounds in testis across the blood-testis-barrier. The sequence is that of Multidrug and toxin extrusion protein 1 (Slc47a1) from Rattus norvegicus (Rat).